The following is a 618-amino-acid chain: Mitochondrial Rho GTPase 2 (618 aa).

Residues 1-591 (MKRDVRILLL…LNAVELGAAS (591 aa)) lie on the Cytoplasmic side of the membrane. One can recognise a Miro 1 domain in the interval 2 to 168 (KRDVRILLLG…FYYAQKAVLH (167 aa)). GTP-binding residues include Gly16, Lys17, Thr18, and Ser19. A Mg(2+)-binding site is contributed by Thr18. Positions 35 and 57 each coordinate Mg(2+). 6 residues coordinate GTP: Ser59, Asn118, Lys119, Asp121, Ala149, and Lys150. EF-hand domains are found at residues 184 to 219 (ACSRALTRIFNLSDQDNNQILSDDELNYFQKSCFGN) and 304 to 339 (LGYQFLQRLFEKHDKDQDGALSPAELQNFFSVFPCM). Ca(2+) contacts are provided by Asp197, Asp199, Asn201, Glu208, Asp317, Asp319, Asp321, and Glu328. In terms of domain architecture, Miro 2 spans 416-579 (RNVFLCKVLG…YTKLATAATF (164 aa)). GTP contacts are provided by Gly428, Gly430, Lys431, Ser432, and Ala433. Mg(2+) is bound at residue Ser432. A Mg(2+)-binding site is contributed by Glu474. Lys528, Asp530, and Cys559 together coordinate GTP. Residues 592-614 (FWLRVALGAAVTALVGFTLYRVL) traverse the membrane as a helical; Anchor for type IV membrane protein segment. The Mitochondrial intermembrane segment spans residues 615–618 (AKNK).

Belongs to the mitochondrial Rho GTPase family. Homodimer.

Its subcellular location is the mitochondrion outer membrane. The catalysed reaction is GTP + H2O = GDP + phosphate + H(+). It carries out the reaction ATP + H2O = ADP + phosphate + H(+). It catalyses the reaction UTP + H2O = UDP + phosphate + H(+). In terms of biological role, atypical mitochondrial nucleoside-triphosphatase (NTPase) involved in mitochondrial trafficking. Probably involved in control of anterograde transport of mitochondria and their subcellular distribution. Can hydrolyze GTP, ATP and UTP. This Gallus gallus (Chicken) protein is Mitochondrial Rho GTPase 2 (RHOT2).